Consider the following 264-residue polypeptide: Glutamate racemase (264 aa).

Residues 10 to 11 and 42 to 43 contribute to the substrate site; these read DS and YG. C73 serves as the catalytic Proton donor/acceptor. Position 74 to 75 (74 to 75) interacts with substrate; that stretch reads NT. C183 serves as the catalytic Proton donor/acceptor. Residue 184 to 185 coordinates substrate; the sequence is TH.

The protein belongs to the aspartate/glutamate racemases family.

It carries out the reaction L-glutamate = D-glutamate. Its pathway is cell wall biogenesis; peptidoglycan biosynthesis. In terms of biological role, provides the (R)-glutamate required for cell wall biosynthesis. This is Glutamate racemase from Streptococcus pneumoniae (strain ATCC BAA-255 / R6).